The following is a 105-amino-acid chain: uncharacterized protein (105 aa).

The 91-residue stretch at 14–104 (HYITACLKII…VEWLMKSNVN (91 aa)) folds into the ABM domain.

This is an uncharacterized protein from Bacillus subtilis (strain 168).